The sequence spans 603 residues: MSDSPQNPGPSSLKIYFRLLGYVKPYIGMFLLSIVGFLIFASTQPMLAGILKYFVDGLSNPDAALFPNVQWPWLRDLHLVYAVPLLIILIAAWQGLGSFLGNFFLAKVSLGLVHDLRVALFNKLLVLPNRYFDTHSSGHLISRITFNVTMVTGAATDAIKVVIREGLTVVFLFLYLLWMNWKLTLVMLAILPVIAVMVTTASRKFRKQSKKIQVAMGDVTHVASETIQGYRVVRSFGGEAYEEKRFLDASQSNTDKQLRMTKTGAVYTPMLQLVIYVAMAILMFLVLWLRGDASAGDLVAYITAAGLLPKPIRQLSEVSSTVQRGVAGAESIFEQLDEAAEEDQGTVEKERVSGRLEVRNLSFRYPGTDKQVLDDISFIAEPGQMIALVGRSGSGKSTLANLVPRFYQHNDGKILLDGVEVEDYRLRNLRRHIALVTQQVTLFNDSVANNIAYGDLAGAPREEIERAAKAANAKEFIDNLPQGFDTEVGENGVLLSGGQRQRLAIARALLKDAPLLILDEATSALDTESERHIQAALDEVMKGRTTLVIAHRLSTIEKADLILVMDQGQIVERGSHAELLAQNGHYARLHAMGLDEQAPAPVG.

Helical transmembrane passes span 20–40, 79–99, 170–190, and 269–289; these read LGYV…FLIF, LVYA…LGSF, VFLF…MLAI, and PMLQ…VLWL. One can recognise an ABC transmembrane type-1 domain in the interval 31–324; sequence LLSIVGFLIF…LSEVSSTVQR (294 aa). Residues 356–592 form the ABC transporter domain; the sequence is LEVRNLSFRY…NGHYARLHAM (237 aa). Residue 390 to 397 coordinates ATP; sequence GRSGSGKS.

This sequence belongs to the ABC transporter superfamily. Lipid exporter (TC 3.A.1.106) family. Homodimer.

The protein resides in the cell inner membrane. The enzyme catalyses ATP + H2O + lipid A-core oligosaccharideSide 1 = ADP + phosphate + lipid A-core oligosaccharideSide 2.. In terms of biological role, involved in lipopolysaccharide (LPS) biosynthesis. Translocates lipid A-core from the inner to the outer leaflet of the inner membrane. Transmembrane domains (TMD) form a pore in the inner membrane and the ATP-binding domain (NBD) is responsible for energy generation. This is ATP-dependent lipid A-core flippase from Pseudomonas aeruginosa (strain ATCC 15692 / DSM 22644 / CIP 104116 / JCM 14847 / LMG 12228 / 1C / PRS 101 / PAO1).